The chain runs to 161 residues: RNA pyrophosphohydrolase (161 aa).

The region spanning 6–149 (GYRPNVGIIL…KKDVYRRALK (144 aa)) is the Nudix hydrolase domain. A Nudix box motif is present at residues 38 to 59 (GGIKSDETPEEALFRELKEEVG).

Belongs to the Nudix hydrolase family. RppH subfamily. A divalent metal cation is required as a cofactor.

In terms of biological role, accelerates the degradation of transcripts by removing pyrophosphate from the 5'-end of triphosphorylated RNA, leading to a more labile monophosphorylated state that can stimulate subsequent ribonuclease cleavage. This is RNA pyrophosphohydrolase from Marinomonas sp. (strain MWYL1).